Reading from the N-terminus, the 311-residue chain is Olfactory receptor 4S2 (311 aa).

The Extracellular segment spans residues 1-23 (MEKINNVTEFIFWGLSQSPEIEK). N6 carries an N-linked (GlcNAc...) asparagine glycan. Residues 24-47 (VCFVVFSFFYIIILLGNLLIMLTV) form a helical membrane-spanning segment. Residues 48 to 55 (CLSNLFKS) lie on the Cytoplasmic side of the membrane. Residues 56–77 (PMYFFLSFLSFVDICYSSVTAP) form a helical membrane-spanning segment. At 78–98 (KMIVDLLAKDKTISYVGCMLQ) the chain is on the extracellular side. Cysteines 95 and 187 form a disulfide. Residues 99–118 (LFGVHFFGCTEIFILTVMAY) traverse the membrane as a helical segment. Topologically, residues 119–137 (DRYVAICKPLHYMTIMNRE) are cytoplasmic. Residues 138–156 (TCNKMLLGTWVGGFLHSII) traverse the membrane as a helical segment. Over 157–193 (QVALVVQLPFCGPNEIDHYFCDVHPVLKLACTETYIV) the chain is Extracellular. A helical transmembrane segment spans residues 194-217 (GVVVTANSGTIALGSFVILLISYS). Residues 218 to 233 (IILVSLRKQSAEGRRK) lie on the Cytoplasmic side of the membrane. The helical transmembrane segment at 234–256 (ALSTCGSHIAMVVIFFGPCTFMY) threads the bilayer. The Extracellular segment spans residues 257 to 267 (MRPDTTFSEDK). The helical transmembrane segment at 268-287 (MVAVFYTIITPMLNPLIYTL) threads the bilayer. The Cytoplasmic portion of the chain corresponds to 288–311 (RNAEVKNAMKKLWGRNVFLEAKGK).

The protein belongs to the G-protein coupled receptor 1 family.

It localises to the cell membrane. In terms of biological role, odorant receptor. This chain is Olfactory receptor 4S2 (OR4S2), found in Homo sapiens (Human).